Consider the following 149-residue polypeptide: D-aminoacyl-tRNA deacylase (149 aa).

The Gly-cisPro motif, important for rejection of L-amino acids signature appears at 137–138; that stretch reads GP.

Belongs to the DTD family. As to quaternary structure, homodimer.

The protein resides in the cytoplasm. It catalyses the reaction glycyl-tRNA(Ala) + H2O = tRNA(Ala) + glycine + H(+). It carries out the reaction a D-aminoacyl-tRNA + H2O = a tRNA + a D-alpha-amino acid + H(+). In terms of biological role, an aminoacyl-tRNA editing enzyme that deacylates mischarged D-aminoacyl-tRNAs. Also deacylates mischarged glycyl-tRNA(Ala), protecting cells against glycine mischarging by AlaRS. Acts via tRNA-based rather than protein-based catalysis; rejects L-amino acids rather than detecting D-amino acids in the active site. By recycling D-aminoacyl-tRNA to D-amino acids and free tRNA molecules, this enzyme counteracts the toxicity associated with the formation of D-aminoacyl-tRNA entities in vivo and helps enforce protein L-homochirality. The sequence is that of D-aminoacyl-tRNA deacylase from Koribacter versatilis (strain Ellin345).